We begin with the raw amino-acid sequence, 333 residues long: Transaldolase (333 aa).

Residue lysine 135 is the Schiff-base intermediate with substrate of the active site.

The protein belongs to the transaldolase family. Type 1 subfamily. In terms of assembly, homodimer.

It localises to the cytoplasm. The catalysed reaction is D-sedoheptulose 7-phosphate + D-glyceraldehyde 3-phosphate = D-erythrose 4-phosphate + beta-D-fructose 6-phosphate. It participates in carbohydrate degradation; pentose phosphate pathway; D-glyceraldehyde 3-phosphate and beta-D-fructose 6-phosphate from D-ribose 5-phosphate and D-xylulose 5-phosphate (non-oxidative stage): step 2/3. In terms of biological role, transaldolase is important for the balance of metabolites in the pentose-phosphate pathway. The sequence is that of Transaldolase from Prochlorococcus marinus (strain MIT 9301).